The following is a 535-amino-acid chain: Probable serine/threonine protein phosphatase 2A regulatory subunit B''delta (535 aa).

Residues 67-104 (SGTNSGSNSPLASMFPARNGPPLSPRNSTGSPRIARQR) form a disordered region. EF-hand domains lie at 174–209 (VPSF…GNML) and 387–422 (SSEP…QLHR). The Ca(2+) site is built by D400, D402, N404, and E411.

PP2A consists of a common heterodimeric core enzyme, composed of a 36 kDa catalytic subunit (subunit C) and a 65 kDa constant regulatory subunit (PR65 or subunit A), that associates with a variety of regulatory subunits. Proteins that associate with the core dimer include three families of regulatory subunits B (the R2/B/PR55/B55, R3/B''/PR72/PR130/PR59 and R5/B'/B56 families) and cell signaling molecules.

In terms of biological role, probable regulatory subunit of type 2A protein phosphatase. The protein is Probable serine/threonine protein phosphatase 2A regulatory subunit B''delta (B''DELTA) of Arabidopsis thaliana (Mouse-ear cress).